A 362-amino-acid polypeptide reads, in one-letter code: MDPNSTVSGDGQATAAIEHRSFARIGFLGNPSDVYFGRTISLTIGNFWASVKLEPSEHLVIKPHPFHDLVQFTSLDHLLNRLQNEGYYGGVRLLMAICKVFRNYCKENDIQLHQANFSLSYDTNIPRQTGLSGSSAIVSAALNCLLDFYNVRHLIKVQVRPNIVLSAEKELGIVAGLQDRVAQVYGGLVHMDFSKEHMDKLGHGIYTPMDISLLPPLHLIYAENPSDSGKVHSMVRQRWLDGDEFIISSMKEVGSLAEEGRTALLNKDHSKLVELMNLNFDIRRRMFGDECLGAMNIEMVEVARRVGAASKFTGSGGAVVVFCPEGPSQVKLLEEECRKAGFTLQPVKIAPSCLNDSDIQTL.

126-136 is a binding site for ATP; the sequence is PRQTGLSGSSA. The active-site Proton acceptor is Asp179.

Belongs to the GHMP kinase family. Requires Mg(2+) as cofactor. The cofactor is Mn(2+). Co(2+) serves as cofactor. In terms of tissue distribution, highly expressed in pollen. Detected in seedlings, inflorescences, seeds, leaves and roots.

The enzyme catalyses D-glucuronate + ATP = 1-phospho-alpha-D-glucuronate + ADP + H(+). Its function is as follows. Sugar-1-kinase with a strict substrate specificity for D-glucuronic acid and ATP. Involved in the biosynthesis of UDP-glucuronic acid (UDP-GlcA), providing nucleotide sugars for cell-wall polymers. May be also involved in a salvage pathway for glucuronic acid. The protein is Glucuronokinase 1 (GLCAK1) of Arabidopsis thaliana (Mouse-ear cress).